Consider the following 250-residue polypeptide: Hydroxyacylglutathione hydrolase (250 aa).

Residues H52, H54, D56, H57, H107, D128, and H166 each contribute to the Zn(2+) site.

This sequence belongs to the metallo-beta-lactamase superfamily. Glyoxalase II family. Monomer. Zn(2+) serves as cofactor.

The catalysed reaction is an S-(2-hydroxyacyl)glutathione + H2O = a 2-hydroxy carboxylate + glutathione + H(+). It participates in secondary metabolite metabolism; methylglyoxal degradation; (R)-lactate from methylglyoxal: step 2/2. Functionally, thiolesterase that catalyzes the hydrolysis of S-D-lactoyl-glutathione to form glutathione and D-lactic acid. The chain is Hydroxyacylglutathione hydrolase from Neisseria meningitidis serogroup A / serotype 4A (strain DSM 15465 / Z2491).